The primary structure comprises 1003 residues: MNGDNASSAADRAGGPAATPVPIPIGWQRCVREGAVYYISPSGTELSSLEQTRSYLLSDGTCKCGLECPLNVPKVFNFDPLAPVTPGGAGVGPASEEDMTKLCNHRRKAVAMATLYRSMETTCSHSSPGEGASPQMFHTVSPGPPSVRPPCRAPPTTPLNGGPGSIPQDPPSVPQAFPPLTGPAGLFPPPRLPDPVPSAGSSSPCFLPRGNAPSPAPPPPPAISLNAPSYNWGASLRSNLVPSDLGSPPAPHASSSPPSDSPLFHCSDALTSPPLPPSNNPPGPPGPPGPATQPPVSSATMHLPLVLGSLGGAPAVEGPGAPPFLASSLLSAAAKAQLPPPSTLQGRRPRAQAPSAAHASPRPSQRRPRRPPTVLRLLEGGGPQTPRRTRPRAPAPVPQPFPLPEPSQPILPSVLSLLGLPTPGPSHSDGSFNLLGSDAHLPPPPALSSGSPPQPRHPIQPSLPGTTSGSLSSVPGAPAPPAASKAPVVPSPVLQSPSDGLGMGAGPACPLPPLAGGEAFPFPSPEQGLALSGAGFPGMLGALPLPLSLGQPPPSPFLSHSLFGVLAGGGQPPPEPLLPPPGGPGPPSAPGEPEGPSLLVASLLSPPPSDLLPPPSAPPSNLLASFLPLLALGPTAGDGEGSAEGAGGPNGEPFSGLGDLPPLLFPPLSAPPTLIALNSALLAASLDPPSGTPPQPCVLSAPQPGPPTSSVTTATTDPGASSLGKAPSNSGRPQLLSPLLSASLLGDLSSLASSPGALPSLLQPPGPLLSSQLGLQLLPGGGAPPALSEASSPLACLLQSLQIPPEQPDAPCLPPESPASALEPEPARPPLSALAPPHASPDPPVPELLTGRGSGKRGRRGGGGLRGINGETRPGRGRKPGSRREPGRLALKWGTRGGFNGQMERSPRRTHHWQHNGELAEGGAEPKDPPLPGTHSEDLKVPPGIVRKSRRGRRRKYNPARNSSSSRQDVTLEPSPTTRAAVPLPPRARPGRPAKNKRRKLAP.

The MBD domain maps to 13-83; sequence AGGPAATPVP…KVFNFDPLAP (71 aa). Positions 59-70 are required for interaction with ASXL1/2/3; that stretch reads DGTCKCGLECPL. Disordered stretches follow at residues 123–222, 241–302, 334–619, 631–659, 684–736, and 753–1003; these read CSHS…PPPA, VPSD…ATMH, AKAQ…SAPP, ALGPTAGDGEGSAEGAGGPNGEPFSGLGD, ASLD…PQLL, and SSPG…KLAP. Pro residues-rich tracts occupy residues 142–157 and 168–196; these read PGPPSVRPPCRAPPTT and QDPPSVPQAFPPLTGPAGLFPPPRLPDPV. Low complexity predominate over residues 252 to 262; sequence HASSSPPSDSP. Positions 273-293 are enriched in pro residues; that stretch reads PPLPPSNNPPGPPGPPGPATQ. Positions 351–363 are enriched in low complexity; it reads AQAPSAAHASPRP. The segment covering 393–409 has biased composition (pro residues); it reads APAPVPQPFPLPEPSQP. Low complexity predominate over residues 410-428; sequence ILPSVLSLLGLPTPGPSHS. The span at 441–458 shows a compositional bias: pro residues; the sequence is LPPPPALSSGSPPQPRHP. Composition is skewed to low complexity over residues 462–500 and 533–550; these read SLPGTTSGSLSSVPGAPAPPAASKAPVVPSPVLQSPSDG and GAGFPGMLGALPLPLSLG. A compositionally biased stretch (pro residues) spans 571–590; that stretch reads QPPPEPLLPPPGGPGPPSAP. Residues 591–604 are compositionally biased toward low complexity; that stretch reads GEPEGPSLLVASLL. Positions 605–618 are enriched in pro residues; sequence SPPPSDLLPPPSAP. The span at 636–650 shows a compositional bias: gly residues; the sequence is AGDGEGSAEGAGGPN. Polar residues predominate over residues 708-719; the sequence is TSSVTTATTDPG. The span at 768–798 shows a compositional bias: low complexity; it reads LLSSQLGLQLLPGGGAPPALSEASSPLACLL. Residues 805–817 show a composition bias toward pro residues; the sequence is PEQPDAPCLPPES. Low complexity predominate over residues 818–837; that stretch reads PASALEPEPARPPLSALAPP. Positions 947-958 are enriched in basic residues; the sequence is RKSRRGRRRKYN. Positions 960-969 are enriched in polar residues; the sequence is ARNSSSSRQD. Residues 989-1003 are compositionally biased toward basic residues; that stretch reads RPGRPAKNKRRKLAP.

As to quaternary structure, core component of the polycomb repressive deubiquitinase (PR-DUB) complex, at least composed of BAP1, one of ASXL1, ASXL2 or (probably) ASXL3, and one of MBD5 or MBD6. Distinct combinations of ASXL and MBD proteins may preferentially bind specific histone modification marks. The PR-DUB core associates with a number of accessory proteins, including FOXK1, FOXK2, KDM1B, HCFC1 and OGT; KDM1B specifically associates with ASXL2 PR-DUB complexes. Interacts (via MBD domain) with ASXL1, ASXL2 and ASXL3 (via PHD domain); the interaction is probably direct, mediates association with other PR-DUB complex core components. Expressed at highest levels in adult testis.

It is found in the nucleus. The protein resides in the chromosome. Non-catalytic component of the polycomb repressive deubiquitinase (PR-DUB) complex, a complex that specifically mediates deubiquitination of histone H2A monoubiquitinated at 'Lys-120' (H2AK119ub1). Important for stability of PR-DUB components and stimulating its ubiquitinase activity. As part of the PR-DUB complex, associates with chromatin enriched in histone marks H3K4me1, H3K4me3, and H3K27Ac, but not in H3K27me3. MBD5 and MBD6 containing complexes associate with distinct chromatin regions enriched in genes involved in different pathways. Heterochromatin recruitment is not mediated by DNA methylation. The PR-DUB complex is an epigenetic regulator of gene expression, including genes involved in development, cell communication, signaling, cell proliferation and cell viability; may promote cancer cell growth. This Mus musculus (Mouse) protein is Methyl-CpG-binding domain protein 6 (Mbd6).